The sequence spans 966 residues: Valine--tRNA ligase (966 aa).

The short motif at 48 to 58 (PNITGGLHLGH) is the 'HIGH' region element. Residues 348-368 (DYKDARKKIIEECKRLKILED) are a coiled coil. A 'KMSKS' region motif is present at residues 566 to 570 (KMSKS). Lys569 is a binding site for ATP. A coiled-coil region spans residues 939–960 (FKKSQEKLNHYNKTKNKLLNQY).

This sequence belongs to the class-I aminoacyl-tRNA synthetase family. ValS type 1 subfamily. Monomer.

It is found in the cytoplasm. The enzyme catalyses tRNA(Val) + L-valine + ATP = L-valyl-tRNA(Val) + AMP + diphosphate. Functionally, catalyzes the attachment of valine to tRNA(Val). As ValRS can inadvertently accommodate and process structurally similar amino acids such as threonine, to avoid such errors, it has a 'posttransfer' editing activity that hydrolyzes mischarged Thr-tRNA(Val) in a tRNA-dependent manner. This is Valine--tRNA ligase from Blochmanniella floridana.